Here is a 311-residue protein sequence, read N- to C-terminus: Lipoyl synthase (311 aa).

7 residues coordinate [4Fe-4S] cluster: Cys47, Cys52, Cys58, Cys73, Cys77, Cys80, and Ser286. The region spanning 59-276 is the Radical SAM core domain; that stretch reads WSRHTATYLA…RSVGESLGLF (218 aa).

Belongs to the radical SAM superfamily. Lipoyl synthase family. The cofactor is [4Fe-4S] cluster.

The protein resides in the cytoplasm. It carries out the reaction [[Fe-S] cluster scaffold protein carrying a second [4Fe-4S](2+) cluster] + N(6)-octanoyl-L-lysyl-[protein] + 2 oxidized [2Fe-2S]-[ferredoxin] + 2 S-adenosyl-L-methionine + 4 H(+) = [[Fe-S] cluster scaffold protein] + N(6)-[(R)-dihydrolipoyl]-L-lysyl-[protein] + 4 Fe(3+) + 2 hydrogen sulfide + 2 5'-deoxyadenosine + 2 L-methionine + 2 reduced [2Fe-2S]-[ferredoxin]. The protein operates within protein modification; protein lipoylation via endogenous pathway; protein N(6)-(lipoyl)lysine from octanoyl-[acyl-carrier-protein]: step 2/2. Catalyzes the radical-mediated insertion of two sulfur atoms into the C-6 and C-8 positions of the octanoyl moiety bound to the lipoyl domains of lipoate-dependent enzymes, thereby converting the octanoylated domains into lipoylated derivatives. The protein is Lipoyl synthase of Chlamydia trachomatis serovar A (strain ATCC VR-571B / DSM 19440 / HAR-13).